Consider the following 79-residue polypeptide: Small ribosomal subunit protein bS18 (79 aa).

The protein belongs to the bacterial ribosomal protein bS18 family. Part of the 30S ribosomal subunit. Forms a tight heterodimer with protein bS6.

Binds as a heterodimer with protein bS6 to the central domain of the 16S rRNA, where it helps stabilize the platform of the 30S subunit. The polypeptide is Small ribosomal subunit protein bS18 (Bradyrhizobium diazoefficiens (strain JCM 10833 / BCRC 13528 / IAM 13628 / NBRC 14792 / USDA 110)).